Consider the following 202-residue polypeptide: Na(+)-translocating NADH-quinone reductase subunit E (202 aa).

A run of 6 helical transmembrane segments spans residues 11–31 (SVFI…FIAV), 35–55 (IETA…TVPA), 81–101 (FIAL…LEMV), 114–134 (GIFL…LFMI), 144–164 (VVYG…MAGV), and 180–200 (LGIT…FSGI).

Belongs to the NqrDE/RnfAE family. As to quaternary structure, composed of six subunits; NqrA, NqrB, NqrC, NqrD, NqrE and NqrF.

It is found in the cell inner membrane. The catalysed reaction is a ubiquinone + n Na(+)(in) + NADH + H(+) = a ubiquinol + n Na(+)(out) + NAD(+). Functionally, NQR complex catalyzes the reduction of ubiquinone-1 to ubiquinol by two successive reactions, coupled with the transport of Na(+) ions from the cytoplasm to the periplasm. NqrA to NqrE are probably involved in the second step, the conversion of ubisemiquinone to ubiquinol. This is Na(+)-translocating NADH-quinone reductase subunit E from Methylococcus capsulatus (strain ATCC 33009 / NCIMB 11132 / Bath).